The chain runs to 312 residues: Serine/threonine-protein phosphatase PP1 isozyme 5 (312 aa).

An N-acetylalanine modification is found at alanine 2. Mn(2+) is bound by residues aspartate 70, histidine 72, aspartate 98, and asparagine 130. Histidine 131 acts as the Proton donor in catalysis. Residues histidine 179 and histidine 254 each coordinate Mn(2+).

The protein belongs to the PPP phosphatase family. PP-1 subfamily. It depends on Mn(2+) as a cofactor.

It is found in the nucleus. It localises to the cytoplasm. The catalysed reaction is O-phospho-L-seryl-[protein] + H2O = L-seryl-[protein] + phosphate. It carries out the reaction O-phospho-L-threonyl-[protein] + H2O = L-threonyl-[protein] + phosphate. Phosphatase activity is strongly reduced by the protein phosphatase inhibitor 2 (I-2). Its function is as follows. Serine/threonine-protein phosphatase that possesses phosphatase activity toward para-nitrophenyl phosphate (pNPP) in vitro. This is Serine/threonine-protein phosphatase PP1 isozyme 5 from Arabidopsis thaliana (Mouse-ear cress).